A 238-amino-acid chain; its full sequence is DNA repair protein RecO (238 aa).

It belongs to the RecO family.

Functionally, involved in DNA repair and RecF pathway recombination. The protein is DNA repair protein RecO of Hahella chejuensis (strain KCTC 2396).